A 184-amino-acid polypeptide reads, in one-letter code: Adenine phosphoribosyltransferase (184 aa).

This sequence belongs to the purine/pyrimidine phosphoribosyltransferase family. As to quaternary structure, homodimer.

The protein localises to the cytoplasm. It catalyses the reaction AMP + diphosphate = 5-phospho-alpha-D-ribose 1-diphosphate + adenine. It functions in the pathway purine metabolism; AMP biosynthesis via salvage pathway; AMP from adenine: step 1/1. Functionally, catalyzes a salvage reaction resulting in the formation of AMP, that is energically less costly than de novo synthesis. This Shewanella putrefaciens (strain CN-32 / ATCC BAA-453) protein is Adenine phosphoribosyltransferase.